We begin with the raw amino-acid sequence, 348 residues long: Ion-translocating oxidoreductase complex subunit D (348 aa).

The next 5 membrane-spanning stretches (helical) occupy residues Leu15–Ala35, Tyr36–Ile56, Leu67–Ser87, Ile88–Ala108, and Val125–Ile145. Thr186 bears the FMN phosphoryl threonine mark. 5 helical membrane-spanning segments follow: residues Leu212 to Ile232, Ile241 to Pro261, Leu265 to Thr285, Leu298 to Pro318, and Ala320 to Gln340.

It belongs to the NqrB/RnfD family. The complex is composed of six subunits: RnfA, RnfB, RnfC, RnfD, RnfE and RnfG. Requires FMN as cofactor.

It is found in the cell inner membrane. Part of a membrane-bound complex that couples electron transfer with translocation of ions across the membrane. The polypeptide is Ion-translocating oxidoreductase complex subunit D (Actinobacillus pleuropneumoniae serotype 3 (strain JL03)).